Consider the following 166-residue polypeptide: 3-isopropylmalate dehydratase small subunit (166 aa).

This sequence belongs to the LeuD family. LeuD type 2 subfamily. In terms of assembly, heterodimer of LeuC and LeuD.

The enzyme catalyses (2R,3S)-3-isopropylmalate = (2S)-2-isopropylmalate. The protein operates within amino-acid biosynthesis; L-leucine biosynthesis; L-leucine from 3-methyl-2-oxobutanoate: step 2/4. Catalyzes the isomerization between 2-isopropylmalate and 3-isopropylmalate, via the formation of 2-isopropylmaleate. In Nautilia profundicola (strain ATCC BAA-1463 / DSM 18972 / AmH), this protein is 3-isopropylmalate dehydratase small subunit.